A 141-amino-acid polypeptide reads, in one-letter code: Large ribosomal subunit protein uL11 (141 aa).

It belongs to the universal ribosomal protein uL11 family. Part of the ribosomal stalk of the 50S ribosomal subunit. Interacts with L10 and the large rRNA to form the base of the stalk. L10 forms an elongated spine to which L12 dimers bind in a sequential fashion forming a multimeric L10(L12)X complex. One or more lysine residues are methylated.

In terms of biological role, forms part of the ribosomal stalk which helps the ribosome interact with GTP-bound translation factors. In Thermotoga petrophila (strain ATCC BAA-488 / DSM 13995 / JCM 10881 / RKU-1), this protein is Large ribosomal subunit protein uL11.